Here is a 309-residue protein sequence, read N- to C-terminus: Olfactory receptor 6C4 (309 aa).

Residues Met1–Val23 are Extracellular-facing. Asn3 carries N-linked (GlcNAc...) asparagine glycosylation. The chain crosses the membrane as a helical span at residues Met24 to Ile44. Topologically, residues Thr45–His52 are cytoplasmic. Residues Leu53 to Ser73 form a helical membrane-spanning segment. Over Ile74–Thr97 the chain is Extracellular. A disulfide bond links Cys95 and Cys187. The helical transmembrane segment at Gln98 to Tyr118 threads the bilayer. Topologically, residues Asp119–Arg137 are cytoplasmic. The chain crosses the membrane as a helical span at residues Val138–Ile158. Residues Ile159–Leu195 lie on the Extracellular side of the membrane. The chain crosses the membrane as a helical span at residues Met196–Ser215. Topologically, residues Tyr216–Ala235 are cytoplasmic. A helical membrane pass occupies residues Phe236–Met256. Residues Tyr257–Asn269 are Extracellular-facing. The helical transmembrane segment at Lys270 to Leu290 threads the bilayer. Residues Arg291–Leu309 lie on the Cytoplasmic side of the membrane.

Belongs to the G-protein coupled receptor 1 family.

Its subcellular location is the cell membrane. Its function is as follows. Odorant receptor. This Homo sapiens (Human) protein is Olfactory receptor 6C4 (OR6C4).